Reading from the N-terminus, the 510-residue chain is MDIRAAEISAILKDQIKNFGQEAEVTEVGQVLSVGDGIARVYGLDNVLAGEMVEFENGTRGMALNLETDNVGIVIFGADREIKEGQTVKRTRSIVDTPVGKGLLGRVVDALGNPIDGKGPIQATERKRVDVKAPGIIPRKSVNEPMATGLKAIDALIPVGRGQRELIIGDRQTGKTAIALDTILNQKPLNVEGAPEGQKLYCVYVAVGQKRSTVAQFVKVLEEQGALEYSIVVAATASDPAPMQYIAPFTGCTMGEYFRDNGMHAVIIYDDLSKQAVAYRQMSLLLRRPPGREAYPGDVFYLHSRLLERAAKLNEDHGSGSLTALPIIETQANDVSAYIPTNVISITDGQIFLETDLFFQGIRPAVNVGLSVSRVGSSAQTKAMKKVAGKIKGELAQYREMAAFAQFGSDLDASTQRLLNRGSRLTELLKQPQFSPLKMEEQVVVIYAGVNGYLDALPVAKVRSFEDGLLSLLRGKESAILDAIRTSRDLSDDTAAKLKAVIESYAKTFA.

169–176 lines the ATP pocket; sequence GDRQTGKT.

This sequence belongs to the ATPase alpha/beta chains family. As to quaternary structure, F-type ATPases have 2 components, CF(1) - the catalytic core - and CF(0) - the membrane proton channel. CF(1) has five subunits: alpha(3), beta(3), gamma(1), delta(1), epsilon(1). CF(0) has four main subunits: a(1), b(1), b'(1) and c(9-12).

The protein resides in the cell inner membrane. It carries out the reaction ATP + H2O + 4 H(+)(in) = ADP + phosphate + 5 H(+)(out). Functionally, produces ATP from ADP in the presence of a proton gradient across the membrane. The alpha chain is a regulatory subunit. This is ATP synthase subunit alpha from Rhodopseudomonas palustris (strain BisB5).